A 1286-amino-acid polypeptide reads, in one-letter code: MASESGLNGDPNILEEVSETKRDKEEEEEVKKTEKKDEEHEKTKTVPFYKLFAFADSFDFLLMILGTLGSIGNGLGFPLMTLLFGDLIDAFGENQTNTTDKVSKVALKFVWLGIGTFAAAFLQLSGWMISGERQAARIRSLYLKTILRQDIAFFDIDTNTGEVVGRMSGDTVLIQDAMGEKVGKAIQLLATFVGGFVIAFVRGWLLTLVMLSSIPLLVMAGALLAIVIAKTASRGQTAYAKAATVVEQTIGSIRTVASFTGEKQAISNYNKHLVTAYKAGVIEGGSTGLGLGTLFLVVFCSYALAVWYGGKLILDKGYTGGQVLNIIIAVLTGSMSLGQTSPCLSAFAAGQAAAYKMFETIERRPNIDSYSTNGKVLDDIKGDIELKDVYFTYPARPDEQIFRGFSLFISSGTTVALVGQSGSGKSTVVSLIERFYDPQAGDVLIDGINLKEFQLKWIRSKIGLVSQEPVLFTASIKDNIAYGKEDATTEEIKAAAELANASKFVDKLPQGLDTMVGEHGTQLSGGQKQRIAVARAILKDPRILLLDEATSALDAESERVVQEALDRIMVNRTTVVVAHRLSTVRNADMIAVIHQGKIVEKGSHTELLKDPEGAYSQLIRLQEEKKSDENAAEEQKMSSIESFKQSSLRKSSLGRSLSKGGSSRGNSSRHSFNMFGFPAGIDGNVVQDQEEDDTTQPKTEPKKVSIFRIAALNKPEIPVLILGSISAAANGVILPIFGILISSVIKAFFQPPKKLKEDTSFWAIIFMVLGFASIIAYPAQTFFFAIAGCKLVQRIRSMCFEKVVHMEVGWFDEPENSSGTIGARLSADAATIRGLVGDSLAQTVQNLSSILAGLIIAFLACWQLAFVVLAMLPLIALNGFLYMKFMKGFSADAKKMYGEASQVANDAVGSIRTVASFCAEDKVMNMYSKKCEGPMKNGIRQGIVSGIGFGFSFFVLFSSYAASFYVGARLVDDGKTTFDSVFRVFFALTMAAMAISQSSSLSPDSSKADVAAASIFAIMDRESKIDPSVESGRVLDNVKGDIELRHVSFKYPARPDVQIFQDLCLSIRAGKTVALVGESGSGKSTVIALLQRFYDPDSGEITLDGVEIKSLRLKWLRQQTGLVSQEPILFNETIRANIAYGKGGDASESEIVSSAELSNAHGFISGLQQGYDTMVGERGIQLSGGQKQRVAIARAIVKDPKVLLLDEATSALDAESERVVQDALDRVMVNRTTIVVAHRLSTIKNADVIAVVKNGVIVEKGKHDTLINIKDGVYASLVQLHLTAAS.

A disordered region spans residues 1–39 (MASESGLNGDPNILEEVSETKRDKEEEEEVKKTEKKDEE). Positions 18–39 (SETKRDKEEEEEVKKTEKKDEE) are enriched in basic and acidic residues. A helical transmembrane segment spans residues 60 to 80 (FLLMILGTLGSIGNGLGFPLM). Residues 63 to 349 (MILGTLGSIG…TSPCLSAFAA (287 aa)) enclose the ABC transmembrane type-1 1 domain. N-linked (GlcNAc...) asparagine glycans are attached at residues Asn94 and Asn97. The next 5 membrane-spanning stretches (helical) occupy residues 109–129 (FVWL…GWMI), 186–206 (IQLL…GWLL), 208–228 (LVML…AIVI), 288–308 (GLGL…AVWY), and 317–337 (GYTG…SMSL). The region spanning 384 to 620 (IELKDVYFTY…PEGAYSQLIR (237 aa)) is the ABC transporter 1 domain. 419-426 (GQSGSGKS) is an ATP binding site. N-linked (GlcNAc...) asparagine glycosylation is found at Asn500 and Asn571. A compositionally biased stretch (basic and acidic residues) spans 625 to 636 (KKSDENAAEEQK). The segment at 625-669 (KKSDENAAEEQKMSSIESFKQSSLRKSSLGRSLSKGGSSRGNSSR) is disordered. Low complexity predominate over residues 646–669 (SSLRKSSLGRSLSKGGSSRGNSSR). Asn666 is a glycosylation site (N-linked (GlcNAc...) asparagine). Ser671 carries the post-translational modification Phosphoserine. An ABC transmembrane type-1 2 domain is found at 720–1007 (LILGSISAAA…SSSLSPDSSK (288 aa)). 2 consecutive transmembrane segments (helical) span residues 721–741 (ILGS…GILI) and 764–784 (IIFM…TFFF). Asn816 and Asn846 each carry an N-linked (GlcNAc...) asparagine glycan. Helical transmembrane passes span 850-870 (ILAG…VVLA), 871-891 (MLPL…GFSA), 942-962 (GIVS…SYAA), and 976-996 (TTFD…MAIS). Positions 1042 to 1279 (IELRHVSFKY…KDGVYASLVQ (238 aa)) constitute an ABC transporter 2 domain. 1077-1084 (GESGSGKS) contributes to the ATP binding site. 2 N-linked (GlcNAc...) asparagine glycosylation sites follow: Asn1131 and Asn1230.

It belongs to the ABC transporter superfamily. ABCB family. Multidrug resistance exporter (TC 3.A.1.201) subfamily. In terms of assembly, interacts with 1-naphthylphthalamic acid (NPA). Phosphorylation level varies significantly during early response to bacterial elicitor. As to expression, mostly expressed in roots, especially in the root elongation zone and lateral roots. In mature portion of the root, expressed in the epidermis and cortex. In the root elongation zone, confined to epidermis. In root tips, present in the root cap, S3 columella and epidermal cells.

The protein localises to the cell membrane. Functionally, auxin influx transporter that mediates the transport of auxin in roots. Contributes to the basipetal transport in hypocotyls and root tips by establishing an auxin uptake sink in the root cap. Confers sensitivity to 1-N-naphthylphthalamic acid (NPA). Regulates the root elongation, the initiation of lateral roots and the development of root hairs. Can transport IAA, indole-3-propionic acid, NPA syringic acid, vanillic acid and some auxin metabolites, but not 2,4-D and 1-naphthaleneacetic acid. The chain is ABC transporter B family member 4 (ABCB4) from Arabidopsis thaliana (Mouse-ear cress).